An 87-amino-acid polypeptide reads, in one-letter code: Sec-independent protein translocase protein TatA (87 aa).

Residues 1-21 (MGSFSIWHWLIVLLIVVMVFG) traverse the membrane as a helical segment. The disordered stretch occupies residues 40–87 (KDGMKDGSTPEGTPASTTAATPPAGQVTNQQAHAADPGTIDVEAKHKG). Low complexity predominate over residues 46–64 (GSTPEGTPASTTAATPPAG).

It belongs to the TatA/E family. The Tat system comprises two distinct complexes: a TatABC complex, containing multiple copies of TatA, TatB and TatC subunits, and a separate TatA complex, containing only TatA subunits. Substrates initially bind to the TatABC complex, which probably triggers association of the separate TatA complex to form the active translocon.

It localises to the cell inner membrane. Part of the twin-arginine translocation (Tat) system that transports large folded proteins containing a characteristic twin-arginine motif in their signal peptide across membranes. TatA could form the protein-conducting channel of the Tat system. The sequence is that of Sec-independent protein translocase protein TatA from Paracidovorax citrulli (strain AAC00-1) (Acidovorax citrulli).